The sequence spans 99 residues: Putative septation protein SpoVG (99 aa).

It belongs to the SpoVG family.

Could be involved in septation. This is Putative septation protein SpoVG from Exiguobacterium sp. (strain ATCC BAA-1283 / AT1b).